The primary structure comprises 151 residues: Putative pre-16S rRNA nuclease (151 aa).

Belongs to the YqgF nuclease family.

The protein resides in the cytoplasm. In terms of biological role, could be a nuclease involved in processing of the 5'-end of pre-16S rRNA. The protein is Putative pre-16S rRNA nuclease of Neisseria meningitidis serogroup C (strain 053442).